A 600-amino-acid chain; its full sequence is Elongation factor 4 (600 aa).

One can recognise a tr-type G domain in the interval 4 to 186; it reads SKIRNFSIIA…EIVKKIPAPQ (183 aa). Residues 16 to 21 and 133 to 136 contribute to the GTP site; these read DHGKST and NKID.

Belongs to the TRAFAC class translation factor GTPase superfamily. Classic translation factor GTPase family. LepA subfamily.

The protein localises to the cell inner membrane. The catalysed reaction is GTP + H2O = GDP + phosphate + H(+). Required for accurate and efficient protein synthesis under certain stress conditions. May act as a fidelity factor of the translation reaction, by catalyzing a one-codon backward translocation of tRNAs on improperly translocated ribosomes. Back-translocation proceeds from a post-translocation (POST) complex to a pre-translocation (PRE) complex, thus giving elongation factor G a second chance to translocate the tRNAs correctly. Binds to ribosomes in a GTP-dependent manner. In Trichlorobacter lovleyi (strain ATCC BAA-1151 / DSM 17278 / SZ) (Geobacter lovleyi), this protein is Elongation factor 4.